The sequence spans 270 residues: Probable septum site-determining protein MinC (270 aa).

Residues Asp-105 to Ala-129 are disordered. A compositionally biased stretch (low complexity) spans Glu-116–Ala-129.

It belongs to the MinC family. In terms of assembly, interacts with MinD and FtsZ.

Cell division inhibitor that blocks the formation of polar Z ring septums. Rapidly oscillates between the poles of the cell to destabilize FtsZ filaments that have formed before they mature into polar Z rings. Prevents FtsZ polymerization. The protein is Probable septum site-determining protein MinC of Burkholderia pseudomallei (strain 1106a).